We begin with the raw amino-acid sequence, 314 residues long: Protein ATP1B4 (314 aa).

The segment covering 1–17 (MATTAGEQANYLQSADS) has biased composition (polar residues). Residues 1-37 (MATTAGEQANYLQSADSMSDGRQHHPEEAGEKKQEEQ) are disordered. The Cytoplasmic portion of the chain corresponds to 1–69 (MATTAGEQAN…VLGRDKKSWA (69 aa)). Residues 19-37 (SDGRQHHPEEAGEKKQEEQ) show a composition bias toward basic and acidic residues. The chain crosses the membrane as a helical span at residues 70–90 (LILLFYFILYCFLAGLFALCI). The Extracellular segment spans residues 91 to 314 (YGLLATISPY…GRVAFTLHIG (224 aa)). An intrachain disulfide couples C160 to C179. N188 carries an N-linked (GlcNAc...) asparagine glycan. Cystine bridges form between C189–C205 and C228–C287. N264 carries N-linked (GlcNAc...) asparagine glycosylation.

This sequence belongs to the X(+)/potassium ATPases subunit beta family. Composed of two subunits: alpha (catalytic) and beta (accessory). In terms of processing, glycosylated. Expressed in skeletal muscle, liver, lung, kidney, heart, brain and skin.

It localises to the membrane. This is the non-catalytic component of the active enzyme, which catalyzes the hydrolysis of ATP coupled with the exchange of Na(+) and K(+) ions across the plasma membrane. This Xenopus laevis (African clawed frog) protein is Protein ATP1B4 (atp1b4).